Consider the following 450-residue polypeptide: tRNA modification GTPase MnmE (450 aa).

(6S)-5-formyl-5,6,7,8-tetrahydrofolate is bound by residues K21, E78, and K117. A TrmE-type G domain is found at 213 to 376 (GHALSIIGKP…LSQKISAFFP (164 aa)). N223 is a binding site for K(+). GTP is bound by residues 223–228 (NAGKSS), 242–248 (SDIKGTT), and 267–270 (DTAG). A Mg(2+)-binding site is contributed by S227. K(+)-binding residues include S242, I244, and T247. T248 provides a ligand contact to Mg(2+). Residue K450 participates in (6S)-5-formyl-5,6,7,8-tetrahydrofolate binding.

The protein belongs to the TRAFAC class TrmE-Era-EngA-EngB-Septin-like GTPase superfamily. TrmE GTPase family. As to quaternary structure, homodimer. Heterotetramer of two MnmE and two MnmG subunits. It depends on K(+) as a cofactor.

It is found in the cytoplasm. Its function is as follows. Exhibits a very high intrinsic GTPase hydrolysis rate. Involved in the addition of a carboxymethylaminomethyl (cmnm) group at the wobble position (U34) of certain tRNAs, forming tRNA-cmnm(5)s(2)U34. In Helicobacter acinonychis (strain Sheeba), this protein is tRNA modification GTPase MnmE.